The sequence spans 207 residues: Cytochrome c biogenesis ATP-binding export protein CcmA (207 aa).

The region spanning 4–207 is the ABC transporter domain; that stretch reads LEVRELLCER…RISLTQTRAV (204 aa). 36–43 is an ATP binding site; it reads GSNGAGKT.

The protein belongs to the ABC transporter superfamily. CcmA exporter (TC 3.A.1.107) family. The complex is composed of two ATP-binding proteins (CcmA) and two transmembrane proteins (CcmB).

The protein localises to the cell inner membrane. It catalyses the reaction heme b(in) + ATP + H2O = heme b(out) + ADP + phosphate + H(+). In terms of biological role, part of the ABC transporter complex CcmAB involved in the biogenesis of c-type cytochromes; once thought to export heme, this seems not to be the case, but its exact role is uncertain. Responsible for energy coupling to the transport system. This chain is Cytochrome c biogenesis ATP-binding export protein CcmA, found in Shigella dysenteriae serotype 1 (strain Sd197).